Here is a 187-residue protein sequence, read N- to C-terminus: Elongation factor P (187 aa).

It belongs to the elongation factor P family.

The protein localises to the cytoplasm. Its pathway is protein biosynthesis; polypeptide chain elongation. Involved in peptide bond synthesis. Stimulates efficient translation and peptide-bond synthesis on native or reconstituted 70S ribosomes in vitro. Probably functions indirectly by altering the affinity of the ribosome for aminoacyl-tRNA, thus increasing their reactivity as acceptors for peptidyl transferase. This is Elongation factor P from Arthrobacter sp. (strain FB24).